Here is a 160-residue protein sequence, read N- to C-terminus: Phosphopantetheine adenylyltransferase (160 aa).

A substrate-binding site is contributed by Ser-9. Residues 9–10 (SL) and His-17 contribute to the ATP site. Residues Lys-41, Leu-74, and Lys-88 each contribute to the substrate site. ATP contacts are provided by residues 89–91 (GIR), Glu-99, and 123–129 (YLHLSST).

This sequence belongs to the bacterial CoaD family. As to quaternary structure, homohexamer. It depends on Mg(2+) as a cofactor.

It localises to the cytoplasm. The catalysed reaction is (R)-4'-phosphopantetheine + ATP + H(+) = 3'-dephospho-CoA + diphosphate. It functions in the pathway cofactor biosynthesis; coenzyme A biosynthesis; CoA from (R)-pantothenate: step 4/5. Reversibly transfers an adenylyl group from ATP to 4'-phosphopantetheine, yielding dephospho-CoA (dPCoA) and pyrophosphate. This chain is Phosphopantetheine adenylyltransferase, found in Renibacterium salmoninarum (strain ATCC 33209 / DSM 20767 / JCM 11484 / NBRC 15589 / NCIMB 2235).